The sequence spans 570 residues: Structure-specific endonuclease subunit EME1 (570 aa).

The span at Met-1 to Ser-12 shows a compositional bias: low complexity. Residues Met-1–Glu-42 are disordered. Residues Ser-12 and Ser-15 each carry the phosphoserine modification. Over residues Leu-26–Glu-42 the composition is skewed to basic and acidic residues. Phosphoserine is present on residues Ser-84, Ser-85, and Ser-87. Lys-103 participates in a covalent cross-link: Glycyl lysine isopeptide (Lys-Gly) (interchain with G-Cter in SUMO2). 2 positions are modified to phosphoserine: Ser-111 and Ser-117. Glycyl lysine isopeptide (Lys-Gly) (interchain with G-Cter in SUMO2) cross-links involve residues Lys-136 and Lys-141. Thr-150 carries the post-translational modification Phosphothreonine. Disordered regions lie at residues Lys-187 to Asn-233 and Ala-372 to Gly-400. Basic and acidic residues predominate over residues Arg-220–Asn-233. The interval Lys-250–Thr-456 is nuclease-like domain; forms the post-nick DNA binding interface and is involved in DNA recognition and bending. Positions Arg-476–Asp-570 are helix-hairpin-helix (2HhH); forms the pre-nick DNA binding interface and is involved in DNA recognition and bending.

The protein belongs to the EME1/MMS4 family. Part of the heterodimeric MUS81-EME1 complex.

The protein localises to the nucleus. Its subcellular location is the nucleolus. Its function is as follows. Non-catalytic subunit of the structure-specific, heterodimeric DNA endonuclease MUS81-EME1 which is involved in the maintenance of genome stability. In the complex, EME1 is required for DNA cleavage, participating in DNA recognition and bending. MUS81-EME1 cleaves 3'-flaps and nicked Holliday junctions, and exhibit limited endonuclease activity with 5' flaps and nicked double-stranded DNAs. Active during prometaphase, MUS81-EME1 resolves mitotic recombination intermediates, including Holliday junctions, which form during homologous recombination. The sequence is that of Structure-specific endonuclease subunit EME1 from Homo sapiens (Human).